The chain runs to 322 residues: Ribosomal RNA small subunit methyltransferase H (322 aa).

S-adenosyl-L-methionine contacts are provided by residues 47 to 49 (GGH), Asp67, Phe93, Asp112, and Gln119.

Belongs to the methyltransferase superfamily. RsmH family.

It is found in the cytoplasm. It carries out the reaction cytidine(1402) in 16S rRNA + S-adenosyl-L-methionine = N(4)-methylcytidine(1402) in 16S rRNA + S-adenosyl-L-homocysteine + H(+). Its function is as follows. Specifically methylates the N4 position of cytidine in position 1402 (C1402) of 16S rRNA. In Stenotrophomonas maltophilia (strain R551-3), this protein is Ribosomal RNA small subunit methyltransferase H.